Consider the following 105-residue polypeptide: Large ribosomal subunit protein eL36 (105 aa).

N6-acetyllysine is present on Lys-62.

It belongs to the eukaryotic ribosomal protein eL36 family. As to quaternary structure, component of the large ribosomal subunit.

The protein localises to the cytoplasm. The protein resides in the cytosol. In terms of biological role, component of the large ribosomal subunit. The ribosome is a large ribonucleoprotein complex responsible for the synthesis of proteins in the cell. In Bos taurus (Bovine), this protein is Large ribosomal subunit protein eL36 (RPL36).